A 200-amino-acid polypeptide reads, in one-letter code: Ubiquinol-cytochrome-c reductase complex assembly factor 1 (200 aa).

This sequence belongs to the CBP3 family.

It localises to the mitochondrion inner membrane. Required for the assembly of the ubiquinol-cytochrome c reductase complex (mitochondrial respiratory chain complex III or cytochrome b-c1 complex). May be involved in cytochrome b translation and/or stability. This is Ubiquinol-cytochrome-c reductase complex assembly factor 1 (uqcc1) from Xenopus laevis (African clawed frog).